A 346-amino-acid polypeptide reads, in one-letter code: 4-hydroxy-2-oxovalerate aldolase 2 (346 aa).

The region spanning 8–258 (VTLVDTTLRD…HTGVELFPLI (251 aa)) is the Pyruvate carboxyltransferase domain. Substrate is bound by residues 16-17 (RD), Ser-170, and His-197. Asp-17 contributes to the Mn(2+) binding site. Positions 197 and 199 each coordinate Mn(2+). Tyr-288 contributes to the substrate binding site.

The protein belongs to the 4-hydroxy-2-oxovalerate aldolase family.

It carries out the reaction (S)-4-hydroxy-2-oxopentanoate = acetaldehyde + pyruvate. The protein is 4-hydroxy-2-oxovalerate aldolase 2 of Nocardia farcinica (strain IFM 10152).